Reading from the N-terminus, the 358-residue chain is MQNKIKQLKNYAVYDDIEGFLINKDIRSSSGNSNYMMPSSTRRVSNTRKNYEGDIKQFFSVIKGKDVKSLVPDDLVVSKSELSNYVKYLQEKGLVNNSINRKMTSLKMLYTYLEHDYKDYIDLSVFNTVERLKTVTKNWDKTTQTEAERIAQDMYINERQKPLMKKLFVKFAIRTSFRVSAILRVRWKDIQLDESTGHYIVTVIDKGSQVVSTGINQVFYEELLQLKEEDDSETELVFQGLSEQSLRHSLKRSKKRLGIPPERELVLHSFKGVGIDYVYENSGHDLLAAKEQGNHKNTLTTERYMSRKINIANSAGVTMDEKIDLNPLYEATQEDFISFFENADLVTLKKFIKHVNER.

In terms of domain architecture, Core-binding (CB) spans 23–114 (NKDIRSSSGN…SLKMLYTYLE (92 aa)). In terms of domain architecture, Tyr recombinase spans 137-319 (KNWDKTTQTE…NIANSAGVTM (183 aa)). Catalysis depends on residues R178, K206, H268, and H295. Residue Y304 is the O-(3'-phospho-DNA)-tyrosine intermediate of the active site.

It belongs to the 'phage' integrase family.

Functionally, probable recombinase that does not seem to have a role in chromosome dimer resolution per se but rather may have some facilitative role during chromosome partitioning in general. This chain is SPbeta prophage-derived probable integrase/recombinase YopP (yopP), found in Bacillus subtilis (strain 168).